Consider the following 91-residue polypeptide: MIKDNTVFVGNKPVMNYVLAVVTQFNNGAEEVAIKARGKAISRAVDTAEIALNRFLANVDKKEIFTSTEMIDTDTGKTNVSSIEIVLTHAK.

This sequence belongs to the histone-like Alba family.

It localises to the cytoplasm. It is found in the chromosome. Binds double-stranded DNA tightly but without sequence specificity. Involved in DNA compaction. This chain is DNA/RNA-binding protein Alba, found in Methanoculleus marisnigri (strain ATCC 35101 / DSM 1498 / JR1).